We begin with the raw amino-acid sequence, 305 residues long: U6 small nuclear RNA (adenine-(43)-N(6))-methyltransferase (305 aa).

S-adenosyl-L-methionine contacts are provided by Arg85, Gly110, Glu133, Ser164, and Asn186. The interval 194–217 (SPNPFGGNTRNPQRRPAPNNVRTG) is disordered.

Belongs to the methyltransferase superfamily. METTL16/RlmF family.

The catalysed reaction is adenosine in U6 snRNA + S-adenosyl-L-methionine = N(6)-methyladenosine in U6 snRNA + S-adenosyl-L-homocysteine + H(+). Functionally, RNA N6-methyltransferase that mediates N6-methylation of adenine of U6 small nuclear RNA (U6 snRNA). This Drosophila pseudoobscura pseudoobscura (Fruit fly) protein is U6 small nuclear RNA (adenine-(43)-N(6))-methyltransferase.